Consider the following 327-residue polypeptide: Probable NAD(P)H-dependent D-xylose reductase xyl1 (327 aa).

The active-site Proton donor is Tyr-57. Substrate is bound at residue His-119. NAD(+) is bound by residues 173–174, 222–231, and 278–288; these read SN, SSLGPQSFIE, and KSNNPDRLAQN.

This sequence belongs to the aldo/keto reductase family.

It carries out the reaction xylitol + NAD(+) = D-xylose + NADH + H(+). It catalyses the reaction xylitol + NADP(+) = D-xylose + NADPH + H(+). The protein operates within carbohydrate metabolism; D-xylose degradation. Its function is as follows. Catalyzes the initial reaction in the xylose utilization pathway by reducing D-xylose into xylitol. Xylose is a major component of hemicelluloses such as xylan. Most fungi utilize D-xylose via three enzymatic reactions, xylose reductase (XR), xylitol dehydrogenase (XDH), and xylulokinase, to form xylulose 5-phosphate, which enters pentose phosphate pathway. The chain is Probable NAD(P)H-dependent D-xylose reductase xyl1 (xyl1) from Arthroderma otae (strain ATCC MYA-4605 / CBS 113480) (Microsporum canis).